The primary structure comprises 492 residues: NAD(P)H-quinone oxidoreductase subunit 2 A, chloroplastic (492 aa).

Transmembrane regions (helical) follow at residues leucine 6 to leucine 26, threonine 39 to phenylalanine 59, valine 81 to isoleucine 101, methionine 106 to cysteine 126, leucine 131 to tyrosine 151, tyrosine 165 to glycine 185, proline 209 to alanine 229, tryptophan 277 to isoleucine 297, methionine 305 to aspartate 325, glycine 329 to alanine 349, alanine 377 to phenylalanine 397, leucine 400 to leucine 420, and methionine 466 to isoleucine 486.

It belongs to the complex I subunit 2 family. As to quaternary structure, NDH is composed of at least 16 different subunits, 5 of which are encoded in the nucleus.

It is found in the plastid. It localises to the chloroplast thylakoid membrane. The catalysed reaction is a plastoquinone + NADH + (n+1) H(+)(in) = a plastoquinol + NAD(+) + n H(+)(out). It carries out the reaction a plastoquinone + NADPH + (n+1) H(+)(in) = a plastoquinol + NADP(+) + n H(+)(out). In terms of biological role, NDH shuttles electrons from NAD(P)H:plastoquinone, via FMN and iron-sulfur (Fe-S) centers, to quinones in the photosynthetic chain and possibly in a chloroplast respiratory chain. The immediate electron acceptor for the enzyme in this species is believed to be plastoquinone. Couples the redox reaction to proton translocation, and thus conserves the redox energy in a proton gradient. The protein is NAD(P)H-quinone oxidoreductase subunit 2 A, chloroplastic of Illicium oligandrum (Star anise).